Here is a 142-residue protein sequence, read N- to C-terminus: Hemoglobin subunit alpha (142 aa).

The region spanning 2 to 142 (VLSGEDKSNI…VSTVLTSKYR (141 aa)) is the Globin domain. A Phosphoserine modification is found at Ser-4. N6-succinyllysine is present on residues Lys-8 and Lys-12. Lys-17 bears the N6-acetyllysine; alternate mark. Lys-17 is modified (N6-succinyllysine; alternate). Phosphotyrosine is present on Tyr-25. A Phosphoserine modification is found at Ser-36. An N6-succinyllysine modification is found at Lys-41. At Ser-50 the chain carries Phosphoserine. His-59 contributes to the O2 binding site. His-88 lines the heme b pocket. Ser-103 is subject to Phosphoserine. At Thr-109 the chain carries Phosphothreonine. Ser-112, Ser-125, and Ser-132 each carry phosphoserine. Phosphothreonine occurs at positions 135 and 138. Ser-139 carries the post-translational modification Phosphoserine.

This sequence belongs to the globin family. As to quaternary structure, heterotetramer of two alpha chains and two beta chains. As to expression, red blood cells.

Involved in oxygen transport from the lung to the various peripheral tissues. Functionally, hemopressin acts as an antagonist peptide of the cannabinoid receptor CNR1. Hemopressin-binding efficiently blocks cannabinoid receptor CNR1 and subsequent signaling. This Mus musculus (Mouse) protein is Hemoglobin subunit alpha (Hba).